The chain runs to 392 residues: ATP phosphoribosyltransferase regulatory subunit (392 aa).

The protein belongs to the class-II aminoacyl-tRNA synthetase family. HisZ subfamily. Heteromultimer composed of HisG and HisZ subunits.

It localises to the cytoplasm. It functions in the pathway amino-acid biosynthesis; L-histidine biosynthesis; L-histidine from 5-phospho-alpha-D-ribose 1-diphosphate: step 1/9. Its function is as follows. Required for the first step of histidine biosynthesis. May allow the feedback regulation of ATP phosphoribosyltransferase activity by histidine. The sequence is that of ATP phosphoribosyltransferase regulatory subunit from Synechococcus sp. (strain CC9902).